The following is a 216-amino-acid chain: LexA repressor (216 aa).

Residues 29–49 (RAEIAQALGFRSPNAAEDHLK) constitute a DNA-binding region (H-T-H motif). Residues Ser-134 and Lys-171 each act as for autocatalytic cleavage activity in the active site.

The protein belongs to the peptidase S24 family. In terms of assembly, homodimer.

The enzyme catalyses Hydrolysis of Ala-|-Gly bond in repressor LexA.. In terms of biological role, represses a number of genes involved in the response to DNA damage (SOS response), including recA and lexA. In the presence of single-stranded DNA, RecA interacts with LexA causing an autocatalytic cleavage which disrupts the DNA-binding part of LexA, leading to derepression of the SOS regulon and eventually DNA repair. The protein is LexA repressor of Bordetella bronchiseptica (strain ATCC BAA-588 / NCTC 13252 / RB50) (Alcaligenes bronchisepticus).